Reading from the N-terminus, the 472-residue chain is Glutamate synthase [NADPH] small chain (472 aa).

A 4Fe-4S ferredoxin-type domain is found at 38–69 (GQAKAQADRCLSCGNPYCEWKCPVHNYIPNWL). The [4Fe-4S] cluster site is built by C47, C50, C55, and C59.

As to quaternary structure, aggregate of 4 catalytic active heterodimers, consisting of a large and a small subunit. The cofactor is [4Fe-4S] cluster.

The enzyme catalyses 2 L-glutamate + NADP(+) = L-glutamine + 2-oxoglutarate + NADPH + H(+). It participates in amino-acid biosynthesis; L-glutamate biosynthesis via GLT pathway; L-glutamate from 2-oxoglutarate and L-glutamine (NADP(+) route): step 1/1. Its pathway is energy metabolism; nitrogen metabolism. In terms of biological role, catalyzes the conversion of L-glutamine and 2-oxoglutarate into two molecules of L-glutamate. This chain is Glutamate synthase [NADPH] small chain (gltD), found in Escherichia coli (strain K12).